The chain runs to 288 residues: Phosphopantetheinyl transferase (288 aa).

Residues Arg-60, 99 to 104 (RTEMGK), and 118 to 121 (NLSH) contribute to the CoA site. Residues Asp-139 and Glu-196 each coordinate Mg(2+). 196-200 (EAYLK) serves as a coordination point for CoA.

This sequence belongs to the P-Pant transferase superfamily. AcpS family. As to quaternary structure, monomer.

Its subcellular location is the cytoplasm. The protein resides in the cytosol. It catalyses the reaction apo-[ACP] + CoA = holo-[ACP] + adenosine 3',5'-bisphosphate + H(+). It functions in the pathway lipid metabolism; fatty acid biosynthesis. Its function is as follows. Phosphopantetheinyl transferase that is essential for attaching phosphopantetheine to ACP domains of the polyunsaturated fatty acid (PUFA) synthase converting the inactive apo-synthase to the active holo-synthase. The sequence is that of Phosphopantetheinyl transferase from Thraustochytrium sp. (strain ATCC 26185 / S-3).